The primary structure comprises 173 residues: Shikimate kinase (173 aa).

Residue 14–19 participates in ATP binding; sequence GAGKST. Position 18 (Ser18) interacts with Mg(2+). Residues Asp36, Arg60, and Gly82 each contribute to the substrate site. Arg120 serves as a coordination point for ATP. A substrate-binding site is contributed by Arg139. Residue Gln156 participates in ATP binding.

Belongs to the shikimate kinase family. As to quaternary structure, monomer. The cofactor is Mg(2+).

The protein localises to the cytoplasm. It catalyses the reaction shikimate + ATP = 3-phosphoshikimate + ADP + H(+). Its pathway is metabolic intermediate biosynthesis; chorismate biosynthesis; chorismate from D-erythrose 4-phosphate and phosphoenolpyruvate: step 5/7. Catalyzes the specific phosphorylation of the 3-hydroxyl group of shikimic acid using ATP as a cosubstrate. This Actinobacillus pleuropneumoniae serotype 5b (strain L20) protein is Shikimate kinase.